Consider the following 179-residue polypeptide: MFPMVTGFMNYGQQTVRAARYIGQSFMITLSHANRLPVTIQYPYEKSITSERFRGRIHFEFDKCIACEVCVRVCPIDLPVVDWRLETDIRKKRLLNYSIDFGICIFCGNCVEYCPTNCLSMTEEYELSTYDRHELNYNQIALGRLPMSVIGDYTVRTIMNSTQIKISMDKPLDSRTITN.

4Fe-4S ferredoxin-type domains are found at residues 55–84 (GRIH…VDWR) and 95–124 (LNYS…MTEE). Residues C64, C67, C70, C74, C104, C107, C110, and C114 each contribute to the [4Fe-4S] cluster site.

The protein belongs to the complex I 23 kDa subunit family. As to quaternary structure, NDH is composed of at least 16 different subunits, 5 of which are encoded in the nucleus. [4Fe-4S] cluster serves as cofactor.

The protein localises to the plastid. It localises to the chloroplast thylakoid membrane. The catalysed reaction is a plastoquinone + NADH + (n+1) H(+)(in) = a plastoquinol + NAD(+) + n H(+)(out). It catalyses the reaction a plastoquinone + NADPH + (n+1) H(+)(in) = a plastoquinol + NADP(+) + n H(+)(out). NDH shuttles electrons from NAD(P)H:plastoquinone, via FMN and iron-sulfur (Fe-S) centers, to quinones in the photosynthetic chain and possibly in a chloroplast respiratory chain. The immediate electron acceptor for the enzyme in this species is believed to be plastoquinone. Couples the redox reaction to proton translocation, and thus conserves the redox energy in a proton gradient. The protein is NAD(P)H-quinone oxidoreductase subunit I, chloroplastic of Nymphaea alba (White water-lily).